We begin with the raw amino-acid sequence, 1334 residues long: Lysine-specific demethylase 3A-B (1334 aa).

3 disordered regions span residues 243–288 (DQND…KTSF), 352–382 (PGIQ…SQNL), and 514–533 (KPQE…VTYP). The span at 267–283 (TEVKQTRNEEVPSKDVT) shows a compositional bias: basic and acidic residues. Residues 684–709 (CDACDTTIFNLHWVCPKCGFGVCVDC) form a C6-type zinc finger. The short motif at 897–901 (LRNLL) is the LXXLL motif element. The JmjC domain maps to 1089–1294 (RREGKLNLAA…HCFCLTQEFR (206 aa)). Positions 1133, 1135, and 1262 each coordinate Fe cation.

Belongs to the JHDM2 histone demethylase family. Fe(2+) serves as cofactor.

It localises to the cytoplasm. The protein localises to the nucleus. The enzyme catalyses N(6),N(6)-dimethyl-L-lysyl(9)-[histone H3] + 2 2-oxoglutarate + 2 O2 = L-lysyl(9)-[histone H3] + 2 formaldehyde + 2 succinate + 2 CO2. Its function is as follows. Histone demethylase that specifically demethylates 'Lys-9' of histone H3, thereby playing a central role in histone code. Preferentially demethylates mono- and dimethylated H3 'Lys-9' residue, with a preference for dimethylated residue, while it has weak or no activity on trimethylated H3 'Lys-9'. Demethylation of Lys residue generates formaldehyde and succinate. The chain is Lysine-specific demethylase 3A-B (kdm3a-b) from Xenopus laevis (African clawed frog).